We begin with the raw amino-acid sequence, 505 residues long: ATP synthase subunit alpha (505 aa).

170 to 177 contacts ATP; that stretch reads GDRQTGKT.

The protein belongs to the ATPase alpha/beta chains family. In terms of assembly, F-type ATPases have 2 components, CF(1) - the catalytic core - and CF(0) - the membrane proton channel. CF(1) has five subunits: alpha(3), beta(3), gamma(1), delta(1), epsilon(1). CF(0) has four main subunits: a(1), b(1), b'(1) and c(9-12).

Its subcellular location is the cellular thylakoid membrane. The enzyme catalyses ATP + H2O + 4 H(+)(in) = ADP + phosphate + 5 H(+)(out). In terms of biological role, produces ATP from ADP in the presence of a proton gradient across the membrane. The alpha chain is a regulatory subunit. This is ATP synthase subunit alpha from Prochlorococcus marinus (strain MIT 9313).